Consider the following 275-residue polypeptide: Large ribosomal subunit protein uL2 (275 aa).

2 disordered regions span residues 24 to 48 (LTTD…NAGD) and 224 to 264 (VMNP…NKRT). Over residues 31-42 (KPLTKTKQRTGG) the composition is skewed to basic residues.

Belongs to the universal ribosomal protein uL2 family. Part of the 50S ribosomal subunit. Forms a bridge to the 30S subunit in the 70S ribosome.

Its function is as follows. One of the primary rRNA binding proteins. Required for association of the 30S and 50S subunits to form the 70S ribosome, for tRNA binding and peptide bond formation. It has been suggested to have peptidyltransferase activity; this is somewhat controversial. Makes several contacts with the 16S rRNA in the 70S ribosome. The sequence is that of Large ribosomal subunit protein uL2 from Koribacter versatilis (strain Ellin345).